Reading from the N-terminus, the 795-residue chain is RAS guanyl-releasing protein 1 (795 aa).

Over residues 1 to 12 (MGTLGKAREAPR) the composition is skewed to basic and acidic residues. The disordered stretch occupies residues 1–37 (MGTLGKAREAPRKPCHGSRAGPKARLEAKSTNSPLPA). Residues 53 to 176 (LGHLAKGASL…HLIDTTQINS (124 aa)) form the N-terminal Ras-GEF domain. Positions 57–110 (AKGASLDDLIDSCIQSFDADGNLCRNNQLLQVMLTMHRIIISSAELLQKVMNLY) are ras exchanger motif region; required for transforming activity. At Thr184 the chain carries Phosphothreonine; by PKC. A Ras-GEF domain is found at 205–436 (EPEELSEHLT…YELSYAREPR (232 aa)). 2 consecutive EF-hand domains span residues 470 to 505 (HVQR…FPFS) and 506 to 532 (FCVM…ASSI). Ca(2+) is bound by residues Asp483, Asp485, Asp487, Tyr489, and Glu494. The segment at 541-591 (PHNFQETTYLKPTFCDNCAGFLWGVIKQGYRCKDCGMNCHKQCKDLVVFEC) adopts a Phorbol-ester/DAG-type zinc-finger fold. A Phosphoserine modification is found at Ser597. Residues 686 to 694 (TPGHFVLSS) form a suppress the PT region-mediated translocation to plasma membrane region. Residues 717-795 (LVRKRAFVKW…LAQMDHGDSA (79 aa)) form a PT region; mediates the BCR-dependent translocation to plasma membrane region. A coiled-coil region spans residues 738–779 (ELHLRLRTYQELEQEINTLKADNDALKIQLKYAQKKIESLQL).

Belongs to the RASGRP family. As to quaternary structure, homodimer. Forms a signaling complex with DGKZ and HRAS. Interacts with F-actin. Interacts with SKAP1. In terms of tissue distribution, detected in spleen and thymus. Expressed by mature thymocytes and to a lower extent by bone marrow-derived mast cells (at protein level). Detected in B-cells and keratinocytes (at protein level).

It localises to the cytoplasm. It is found in the cytosol. The protein resides in the cell membrane. The protein localises to the golgi apparatus membrane. Its subcellular location is the endoplasmic reticulum membrane. With respect to regulation, autoinhibited. Activated by diacylglycerol and calcium binding, which induces a conformational change releasing the autoinhibitory state. Regulated by DGKA. Regulated by DGKZ. Regulated by PLC gamma and F-actin polymerization. In terms of biological role, functions as a calcium- and diacylglycerol (DAG)-regulated nucleotide exchange factor specifically activating Ras through the exchange of bound GDP for GTP. Activates the Erk/MAP kinase cascade. Regulates T-cell/B-cell development, homeostasis and differentiation by coupling T-lymphocyte/B-lymphocyte antigen receptors to Ras. Regulates NK cell cytotoxicity and ITAM-dependent cytokine production by activation of Ras-mediated ERK and JNK pathways. Functions in mast cell degranulation and cytokine secretion, regulating FcERI-evoked allergic responses. May also function in differentiation of other cell types. Proto-oncogene, which promotes T-cell lymphomagenesis when its expression is deregulated. In Mus musculus (Mouse), this protein is RAS guanyl-releasing protein 1 (Rasgrp1).